The following is a 559-amino-acid chain: Branched-chain-amino-acid aminotransferase-like protein 2 (559 aa).

It belongs to the class-IV pyridoxal-phosphate-dependent aminotransferase family.

The chain is Branched-chain-amino-acid aminotransferase-like protein 2 from Arabidopsis thaliana (Mouse-ear cress).